Here is a 249-residue protein sequence, read N- to C-terminus: CDP-diacylglycerol pyrophosphatase (249 aa).

A helical membrane pass occupies residues 5–25 (GYFLLAVIVIVAAAGVGYWKF).

This sequence belongs to the Cdh family.

The protein resides in the cell inner membrane. It carries out the reaction a CDP-1,2-diacyl-sn-glycerol + H2O = a 1,2-diacyl-sn-glycero-3-phosphate + CMP + 2 H(+). The protein operates within phospholipid metabolism; CDP-diacylglycerol degradation; phosphatidate from CDP-diacylglycerol: step 1/1. This Salmonella arizonae (strain ATCC BAA-731 / CDC346-86 / RSK2980) protein is CDP-diacylglycerol pyrophosphatase.